We begin with the raw amino-acid sequence, 329 residues long: uncharacterized protein (329 aa).

Disordered regions lie at residues 16–41 (RCGYPKAQEGTPAEGEQNSRKPSRIC) and 183–229 (LENK…KFEP). Residues 213–229 (SNDKANRGEKGEAKFEP) are compositionally biased toward basic and acidic residues.

As to expression, expressed in testis and epididymis. Expressed at lower levels in ovary.

Functionally, dispensable for normal development and fertility. This is an uncharacterized protein from Mus musculus (Mouse).